We begin with the raw amino-acid sequence, 62 residues long: Large ribosomal subunit protein eL24 (62 aa).

The Zn(2+) site is built by C7, C10, C33, and C37. A C4-type zinc finger spans residues 7–37; sequence CSFCGKDILPGTGLMYVRNDGSLLWFCSSKC.

Belongs to the eukaryotic ribosomal protein eL24 family. In terms of assembly, part of the 50S ribosomal subunit. Forms a cluster with proteins L3 and L14. It depends on Zn(2+) as a cofactor.

Functionally, binds to the 23S rRNA. This Sulfolobus acidocaldarius (strain ATCC 33909 / DSM 639 / JCM 8929 / NBRC 15157 / NCIMB 11770) protein is Large ribosomal subunit protein eL24.